Reading from the N-terminus, the 334-residue chain is MTRVLAIETSCDETACAVVEDGRRALSDVVSTQIDIHRRWGGVVPELASRNHVVQVMPVVDEALARSGVGPDGLDAVAVTSGPGLVGALLVGVQAAKALALAWGKPLVGVNHLEGHLVAAFLAEVPPAFPYLGLVVSGGHTSLYAAHGFGDYRLLGQTRDDAAGEAFDKGAKLLGLPYPGGVAIDRLAKEGDPAAIRFPKAIVKGADLDFSFSGLKTALLHHVKKHGVPEGPALADLCASYQEAIVRALVEKAFRAARRLQFERLVLAGGVAANSRLRAAATARAAEYEGMSVFIPPVRLCTDNAAMIAVAGTHALLRGERAGPDLNADPAWRL.

The Fe cation site is built by histidine 112 and histidine 116. Residues 135–139 (VVSGG), aspartate 168, glycine 181, aspartate 185, and asparagine 274 contribute to the substrate site. Aspartate 303 serves as a coordination point for Fe cation.

It belongs to the KAE1 / TsaD family. Fe(2+) is required as a cofactor.

The protein resides in the cytoplasm. It carries out the reaction L-threonylcarbamoyladenylate + adenosine(37) in tRNA = N(6)-L-threonylcarbamoyladenosine(37) in tRNA + AMP + H(+). In terms of biological role, required for the formation of a threonylcarbamoyl group on adenosine at position 37 (t(6)A37) in tRNAs that read codons beginning with adenine. Is involved in the transfer of the threonylcarbamoyl moiety of threonylcarbamoyl-AMP (TC-AMP) to the N6 group of A37, together with TsaE and TsaB. TsaD likely plays a direct catalytic role in this reaction. The protein is tRNA N6-adenosine threonylcarbamoyltransferase of Anaeromyxobacter dehalogenans (strain 2CP-1 / ATCC BAA-258).